The chain runs to 239 residues: Tetraspanin-9 (239 aa).

The Cytoplasmic segment spans residues 1 to 13; it reads MARGCLCCLKYMM. A helical membrane pass occupies residues 14-34; sequence FLFNLIFWLCGCGLLGVGIWL. Over 35 to 55 the chain is Extracellular; that stretch reads SVSQGNFATFSPSFPSLSAAN. A helical membrane pass occupies residues 56 to 76; the sequence is LVIVIGTVVMVTGFLGCLGAI. Residues 77–85 are Cytoplasmic-facing; sequence KENKCLLLS. The chain crosses the membrane as a helical span at residues 86-106; that stretch reads FFIILLIILLTELILLILFFV. Topologically, residues 107–203 are extracellular; the sequence is YMDKVNENAK…VKMWFDDNKH (97 aa). N180 carries an N-linked (GlcNAc...) asparagine glycan. The helical transmembrane segment at 204-224 threads the bilayer; it reads VLGTIGMCILIIQILGMAFSM. The Cytoplasmic segment spans residues 225–239; it reads TLFQQIHRTGKKYDA.

This sequence belongs to the tetraspanin (TM4SF) family.

It localises to the membrane. The polypeptide is Tetraspanin-9 (tspan9) (Xenopus laevis (African clawed frog)).